Consider the following 87-residue polypeptide: Acylphosphatase (87 aa).

One can recognise an Acylphosphatase-like domain in the interval 1–87 (MAWVHGRVQG…EDYQDFRIRY (87 aa)). Active-site residues include arginine 14 and asparagine 32.

The protein belongs to the acylphosphatase family.

The enzyme catalyses an acyl phosphate + H2O = a carboxylate + phosphate + H(+). In Cronobacter sakazakii (strain ATCC BAA-894) (Enterobacter sakazakii), this protein is Acylphosphatase (acyP).